The primary structure comprises 323 residues: MIEFGDFYRLIAKGPLSPWLDTLPAQLSAWQRESLHGKFKTWFNAVEHLPQLTPTTLDLHSGVRAEMSPPISAGQREGMENMLRALMPWRKGPFSLYGLDIDTEWRSDWKWQRVLPHISPLAGRTILDVGCGSGYHLWRMIGEGAHLAVGIDPMQLFLCQFEAIRKLLGGDQRAHVLPLGIEQLPELAAFDTVFSMGVLYHRRSPLDHLYQLKNQLVTDGELVLETLVVEGDSQQVLVPGDRYAQMRNVYFIPSAPALKAWLEKCGFVDVRIADMAVTTTEEQRRTDWMTSESLAEFLDPHDHSKTVEGYPAPLRAVLIARKP.

Carboxy-S-adenosyl-L-methionine contacts are provided by residues Lys-91, Trp-105, Lys-110, Gly-130, 181–182 (IE), Met-196, Tyr-200, and Arg-315.

The protein belongs to the class I-like SAM-binding methyltransferase superfamily. CmoB family. As to quaternary structure, homotetramer.

The catalysed reaction is carboxy-S-adenosyl-L-methionine + 5-hydroxyuridine(34) in tRNA = 5-carboxymethoxyuridine(34) in tRNA + S-adenosyl-L-homocysteine + H(+). Functionally, catalyzes carboxymethyl transfer from carboxy-S-adenosyl-L-methionine (Cx-SAM) to 5-hydroxyuridine (ho5U) to form 5-carboxymethoxyuridine (cmo5U) at position 34 in tRNAs. The polypeptide is tRNA U34 carboxymethyltransferase (Yersinia pestis bv. Antiqua (strain Antiqua)).